A 113-amino-acid polypeptide reads, in one-letter code: Small ribosomal subunit protein bS6 (113 aa).

This sequence belongs to the bacterial ribosomal protein bS6 family.

In terms of biological role, binds together with bS18 to 16S ribosomal RNA. The polypeptide is Small ribosomal subunit protein bS6 (Buchnera aphidicola subsp. Schizaphis graminum (strain Sg)).